Consider the following 212-residue polypeptide: MFEKYIMYLKNLIFFQFIVYFFFISLTILIIKNFQQEYSKSILDKQVAQENLTEEVLKLYSVINSKEEILESYKKYVALSVPKNSVSCLNYQELIPRIKSLGSKYNLVEPIDVSINSVFFKNNVQVIEGENESIHVNNYSINIKYACADFLTFLKIFSEIYSYMPPNTLISFVRVRNEEVLTPKNIYKLSVNHAPNLIYTKLILYIRELSSK.

A helical membrane pass occupies residues 11 to 31 (NLIFFQFIVYFFFISLTILII).

The protein localises to the membrane. This is an uncharacterized protein from Rickettsia prowazekii (strain Madrid E).